A 392-amino-acid polypeptide reads, in one-letter code: Alaserpin (392 aa).

The first 16 residues, 1-16 (MKIIMCIFGLAALAMA), serve as a signal peptide directing secretion. Asn85 is a glycosylation site (N-linked (GlcNAc...) asparagine).

Belongs to the serpin family. Hemolymph.

The protein resides in the secreted. It localises to the extracellular space. Its function is as follows. Inhibits elastase. This chain is Alaserpin, found in Manduca sexta (Tobacco hawkmoth).